The following is a 358-amino-acid chain: G-protein coupled receptor 20 (358 aa).

Residues 1–48 (MPSVSPAGPSAGAVPNATAVTTVRTNASGLEVPLFHLFARLDEELHGT) lie on the Extracellular side of the membrane. N-linked (GlcNAc...) asparagine glycans are attached at residues Asn16 and Asn26. Residues 49–69 (FPGLWLALMAVHGAIFLAGLV) traverse the membrane as a helical segment. Over 70-86 (LNGLALYVFCCRTRAKT) the chain is Cytoplasmic. Residues 87-107 (PSVIYTINLVVTDLLVGLSLP) form a helical membrane-spanning segment. Over 108–125 (TRFAVYYGARGCLRCAFP) the chain is Extracellular. The helical transmembrane segment at 126-146 (HVLGYFLNMHCSILFLTCICV) threads the bilayer. Residues 147 to 168 (DRYLAIVRPEGSRRCRQPACAR) lie on the Cytoplasmic side of the membrane. Residues 169-189 (AVCAFVWLAAGAVTLSVLGVT) form a helical membrane-spanning segment. The Extracellular portion of the chain corresponds to 190 to 196 (GSRPCCR). Residues 197–217 (VFALTVLEFLLPLLVISVFTG) traverse the membrane as a helical segment. Residues 218 to 238 (RIMCALSRPGLLHQGRQRRVR) are Cytoplasmic-facing. The chain crosses the membrane as a helical span at residues 239–259 (AMQLLLTVLIIFLVCFTPFHA). Residues 260–275 (RQVAVALWPDMPHHTS) are Extracellular-facing. The helical transmembrane segment at 276–296 (LVVYHVAVTLSSLNSCMDPIV) threads the bilayer. Residues 297–358 (YCFVTSGFQA…TQALANGPEA (62 aa)) are Cytoplasmic-facing. Positions 315 to 339 (HGEREPSSGDVVSMHRSSKGSGRHH) are disordered. The span at 330–339 (RSSKGSGRHH) shows a compositional bias: basic residues.

It belongs to the G-protein coupled receptor 1 family. As to expression, ubiquitous with highest levels in intestinal tissues. In the brain detected in thalamus, putamen, and caudate, but not in frontal cortex, pons and hypothalamus.

It localises to the cell membrane. In terms of biological role, orphan receptor with constitutive G(i) signaling activity that activate cyclic AMP. In Homo sapiens (Human), this protein is G-protein coupled receptor 20 (GPR20).